The primary structure comprises 207 residues: dTTP/UTP pyrophosphatase (207 aa).

Asp-79 serves as the catalytic Proton acceptor.

Belongs to the Maf family. YhdE subfamily. Requires a divalent metal cation as cofactor.

Its subcellular location is the cytoplasm. It carries out the reaction dTTP + H2O = dTMP + diphosphate + H(+). The catalysed reaction is UTP + H2O = UMP + diphosphate + H(+). Functionally, nucleoside triphosphate pyrophosphatase that hydrolyzes dTTP and UTP. May have a dual role in cell division arrest and in preventing the incorporation of modified nucleotides into cellular nucleic acids. The chain is dTTP/UTP pyrophosphatase from Rhodopseudomonas palustris (strain ATCC BAA-98 / CGA009).